A 391-amino-acid polypeptide reads, in one-letter code: Acridone synthase 2 (391 aa).

Cys-164 is a catalytic residue.

This sequence belongs to the thiolase-like superfamily. Chalcone/stilbene synthases family. In terms of assembly, homodimer.

The catalysed reaction is N-methylanthraniloyl-CoA + 3 malonyl-CoA + 3 H(+) = 1,3-dihydroxy-N-methylacridone + 3 CO2 + 4 CoA + H2O. This Ruta graveolens (Common rue) protein is Acridone synthase 2 (ACS2).